Consider the following 103-residue polypeptide: Large ribosomal subunit protein bL21 (103 aa).

Belongs to the bacterial ribosomal protein bL21 family. In terms of assembly, part of the 50S ribosomal subunit. Contacts protein L20.

In terms of biological role, this protein binds to 23S rRNA in the presence of protein L20. The protein is Large ribosomal subunit protein bL21 of Klebsiella pneumoniae (strain 342).